Reading from the N-terminus, the 859-residue chain is Nitrate reductase [NADPH] (859 aa).

Cys-137 lines the Mo-molybdopterin pocket. A Cytochrome b5 heme-binding domain is found at 502 to 578 (DVVIKYSEFE…LPSMHLGRLE (77 aa)). Heme is bound by residues His-538 and His-561. The FAD-binding FR-type domain occupies 602-713 (RKWHKITLAE…KGPVGEFEYV (112 aa)). FAD-binding positions include 655–658 (RAYT), 672–676 (LIKVY), Phe-677, 687–689 (IMT), Ser-737, and Thr-740. Residue 829–838 (MLLVCGPPGM) participates in NADP(+) binding.

It belongs to the nitrate reductase family. As to quaternary structure, homodimer. It depends on FAD as a cofactor. Heme serves as cofactor. The cofactor is Mo-molybdopterin.

It catalyses the reaction nitrite + NADP(+) + H2O = nitrate + NADPH + H(+). In terms of biological role, nitrate reductase is a key enzyme involved in the first step of nitrate assimilation in plants, fungi and bacteria. The protein is Nitrate reductase [NADPH] (YNR1) of Pichia angusta (Yeast).